The chain runs to 269 residues: Lipid II flippase Amj (269 aa).

7 helical membrane passes run 1 to 21 (MHVITTQVLFIFCFLLLIHSI), 31 to 51 (SGARVGFIASALSLFNVMVIV), 84 to 104 (FLIFGSTVGTILGIILLPSFV), 105 to 125 (ALFSRAIIHLAGGGGSVFQVF), 161 to 181 (LFVINMLITSIYTIGVLSALY), 192 to 212 (TAVMASGLINGIATMLLAIFV), and 245 to 265 (VAGTLLAQLMFIPGAYYIAWL).

This sequence belongs to the Amj family.

The protein localises to the cell membrane. It participates in cell wall biogenesis; peptidoglycan biosynthesis. Functionally, involved in peptidoglycan biosynthesis. Transports lipid-linked peptidoglycan precursors from the inner to the outer leaflet of the cytoplasmic membrane. May serve as a defense mechanism against naturally occurring MurJ antagonists. The chain is Lipid II flippase Amj from Bacillus subtilis (strain 168).